We begin with the raw amino-acid sequence, 503 residues long: MEEFQGYLDLNRSRQHYLLYPLLFREYIYALAHDHGLNRXIGFENAGYDNKSSSIIVKRLITRMYQQNPLIFSAKDSIQNQFFGHNKNLYSQILSEGFAVIVEIPFSLRFLFSLERKXIPKSHNLRSIHSIFPFLEDKFTHLXYVSDVLIPYHIHFEILVQTLRYWVKDASSLHLLRLFLREYWNSLITPKKHITFFFKGNTRLFLFXYNSHICEYEYIFLFLRNQSSHLRSTSSGIFFERIYFYVKIXHFVKXFFDNNFQCILWFFKDPFMHYVXYQGKFFIASKDTPLLMNKWKCYLVNLWQYHFSVWFQPGRIDINQLCKYSFDFLGYRSSVRLNSSVVRSQMLENLFLINNAMKKFETIVPIIPLIGSLYKSNFCNTFGHPISKPTRIDSSDSDIIDRFLRICRNLSHYHSGSSKKKSLYRVKYILRLSCVKTLARKHKRTVRTFVKRLGSEFLEKFLTEEEVVLSLVXPRTYSTSRRLYRGQIWYLDITSINDLXNYE.

The protein belongs to the intron maturase 2 family. MatK subfamily.

It localises to the plastid. Its subcellular location is the chloroplast. Usually encoded in the trnK tRNA gene intron. Probably assists in splicing its own and other chloroplast group II introns. In Agonis flexuosa (Australian willow myrtle), this protein is Maturase K.